The following is a 209-amino-acid chain: Uracil phosphoribosyltransferase (209 aa).

5-phospho-alpha-D-ribose 1-diphosphate-binding positions include arginine 79, arginine 104, and 131 to 139 (DPMLATGGS). Uracil-binding positions include isoleucine 194 and 199–201 (GDA). Aspartate 200 provides a ligand contact to 5-phospho-alpha-D-ribose 1-diphosphate.

It belongs to the UPRTase family. It depends on Mg(2+) as a cofactor.

It carries out the reaction UMP + diphosphate = 5-phospho-alpha-D-ribose 1-diphosphate + uracil. Its pathway is pyrimidine metabolism; UMP biosynthesis via salvage pathway; UMP from uracil: step 1/1. Its activity is regulated as follows. Allosterically activated by GTP. Catalyzes the conversion of uracil and 5-phospho-alpha-D-ribose 1-diphosphate (PRPP) to UMP and diphosphate. The polypeptide is Uracil phosphoribosyltransferase (Exiguobacterium sp. (strain ATCC BAA-1283 / AT1b)).